A 543-amino-acid polypeptide reads, in one-letter code: MARFIFITGGVVSSLGKGLMAASLAALLQARGYRVRIRKFDPYLNVDPGTMSPYQHGEVYVTDDGAETDLDLGHYERFTGVAARQSDNVTSGRIYQGIIAKERRGDYLGATVQVVPHVTDAIKDFARAETDDLDFVLCEIGGTVGDIESLPFIEAIRQLKNEVGRDNAISVHVTLVPYIAAAGELKTKPTQHSVRELASLGVQPDILLCRCEKPLPDSERAKIALFCNVRKEAVIPALDADSIYSVPVQYHGEGLDSEVLRAFGILDAPAPDLTAWYDIMDRKQHPEGEVTIGVVGKYVSLPDAYKSLNEALVHGGMAHRVKVNIRWLDAEMFERDEDLVANLEPLHGILVPGGFGERGSEGKIASVRFARERNVPFFGICLGMQMACIEAARNTSGIANASSTEFGPTDEPVVGLITEWMSAEGLQKRGANTDLGGTMRLGAYDAKLSPNSHVASVYGTNEISERHRHRYEVNGAYRERLEKGGLVFSGMSPDGMLPEIVERPDHPWFIGVQFHPELKSKPFDPHPLFAGFIEAAVKQSRLV.

The tract at residues 1–265 (MARFIFITGG…DSEVLRAFGI (265 aa)) is amidoligase domain. Ser13 lines the CTP pocket. Residue Ser13 participates in UTP binding. Residue 14 to 19 (SLGKGL) participates in ATP binding. Residue Tyr54 participates in L-glutamine binding. Residue Asp71 participates in ATP binding. Positions 71 and 139 each coordinate Mg(2+). CTP-binding positions include 146 to 148 (DIE), 186 to 191 (KTKPTQ), and Lys222. UTP is bound by residues 186 to 191 (KTKPTQ) and Lys222. The Glutamine amidotransferase type-1 domain occupies 291 to 542 (TIGVVGKYVS…IEAAVKQSRL (252 aa)). Residue Gly354 coordinates L-glutamine. Cys381 serves as the catalytic Nucleophile; for glutamine hydrolysis. L-glutamine contacts are provided by residues 382-385 (LGMQ), Glu405, and Arg470. Active-site residues include His515 and Glu517.

Belongs to the CTP synthase family. Homotetramer.

The enzyme catalyses UTP + L-glutamine + ATP + H2O = CTP + L-glutamate + ADP + phosphate + 2 H(+). The catalysed reaction is L-glutamine + H2O = L-glutamate + NH4(+). It carries out the reaction UTP + NH4(+) + ATP = CTP + ADP + phosphate + 2 H(+). It participates in pyrimidine metabolism; CTP biosynthesis via de novo pathway; CTP from UDP: step 2/2. Allosterically activated by GTP, when glutamine is the substrate; GTP has no effect on the reaction when ammonia is the substrate. The allosteric effector GTP functions by stabilizing the protein conformation that binds the tetrahedral intermediate(s) formed during glutamine hydrolysis. Inhibited by the product CTP, via allosteric rather than competitive inhibition. Its function is as follows. Catalyzes the ATP-dependent amination of UTP to CTP with either L-glutamine or ammonia as the source of nitrogen. Regulates intracellular CTP levels through interactions with the four ribonucleotide triphosphates. This chain is CTP synthase, found in Sphingopyxis alaskensis (strain DSM 13593 / LMG 18877 / RB2256) (Sphingomonas alaskensis).